Here is a 482-residue protein sequence, read N- to C-terminus: tRNA sulfurtransferase (482 aa).

The THUMP domain occupies asparagine 61 to arginine 165. Residues leucine 183–isoleucine 184, lysine 265, glycine 287, and glutamine 296 contribute to the ATP site. A disulfide bridge links cysteine 344 with cysteine 456. Positions leucine 404–proline 482 constitute a Rhodanese domain. Cysteine 456 serves as the catalytic Cysteine persulfide intermediate.

It belongs to the ThiI family.

It is found in the cytoplasm. It carries out the reaction [ThiI sulfur-carrier protein]-S-sulfanyl-L-cysteine + a uridine in tRNA + 2 reduced [2Fe-2S]-[ferredoxin] + ATP + H(+) = [ThiI sulfur-carrier protein]-L-cysteine + a 4-thiouridine in tRNA + 2 oxidized [2Fe-2S]-[ferredoxin] + AMP + diphosphate. The enzyme catalyses [ThiS sulfur-carrier protein]-C-terminal Gly-Gly-AMP + S-sulfanyl-L-cysteinyl-[cysteine desulfurase] + AH2 = [ThiS sulfur-carrier protein]-C-terminal-Gly-aminoethanethioate + L-cysteinyl-[cysteine desulfurase] + A + AMP + 2 H(+). It participates in cofactor biosynthesis; thiamine diphosphate biosynthesis. In terms of biological role, catalyzes the ATP-dependent transfer of a sulfur to tRNA to produce 4-thiouridine in position 8 of tRNAs, which functions as a near-UV photosensor. Also catalyzes the transfer of sulfur to the sulfur carrier protein ThiS, forming ThiS-thiocarboxylate. This is a step in the synthesis of thiazole, in the thiamine biosynthesis pathway. The sulfur is donated as persulfide by IscS. This Aliivibrio salmonicida (strain LFI1238) (Vibrio salmonicida (strain LFI1238)) protein is tRNA sulfurtransferase.